A 345-amino-acid chain; its full sequence is Photosystem II protein D1 (345 aa).

3 consecutive transmembrane segments (helical) span residues 30 to 47, 119 to 134, and 143 to 157; these read YVGW…TAAT, HFFI…EWEL, and WIAV…AASA. A chlorophyll a-binding site is contributed by His119. Tyr127 is a pheophytin a binding site. Residues Asp171 and Glu190 each coordinate [CaMn4O5] cluster. The helical transmembrane segment at 198–219 threads the bilayer; that stretch reads FHMLGVAGVFGGSLFSAMHGSL. His199 is a binding site for chlorophyll a. A quinone-binding positions include His216 and 265 to 266; that span reads SF. His216 contributes to the Fe cation binding site. His273 contributes to the Fe cation binding site. A helical membrane pass occupies residues 275–289; the sequence is FLAVWPVVGIWFTAL. 4 residues coordinate [CaMn4O5] cluster: His333, Glu334, Asp343, and Ala345.

This sequence belongs to the reaction center PufL/M/PsbA/D family. PSII is composed of 1 copy each of membrane proteins PsbA, PsbB, PsbC, PsbD, PsbE, PsbF, PsbH, PsbI, PsbJ, PsbK, PsbL, PsbM, PsbT, PsbY, PsbZ, Psb30/Ycf12, at least 3 peripheral proteins of the oxygen-evolving complex and a large number of cofactors. It forms dimeric complexes. It depends on The D1/D2 heterodimer binds P680, chlorophylls that are the primary electron donor of PSII, and subsequent electron acceptors. It shares a non-heme iron and each subunit binds pheophytin, quinone, additional chlorophylls, carotenoids and lipids. D1 provides most of the ligands for the Mn4-Ca-O5 cluster of the oxygen-evolving complex (OEC). There is also a Cl(-1) ion associated with D1 and D2, which is required for oxygen evolution. The PSII complex binds additional chlorophylls, carotenoids and specific lipids. as a cofactor. Tyr-162 forms a radical intermediate that is referred to as redox-active TyrZ, YZ or Y-Z.

It localises to the plastid. It is found in the chloroplast thylakoid membrane. It carries out the reaction 2 a plastoquinone + 4 hnu + 2 H2O = 2 a plastoquinol + O2. In terms of biological role, photosystem II (PSII) is a light-driven water:plastoquinone oxidoreductase that uses light energy to abstract electrons from H(2)O, generating O(2) and a proton gradient subsequently used for ATP formation. It consists of a core antenna complex that captures photons, and an electron transfer chain that converts photonic excitation into a charge separation. The D1/D2 (PsbA/PsbD) reaction center heterodimer binds P680, the primary electron donor of PSII as well as several subsequent electron acceptors. The protein is Photosystem II protein D1 of Euglena gracilis.